The following is a 363-amino-acid chain: Anthranilate phosphoribosyltransferase (363 aa).

5-phospho-alpha-D-ribose 1-diphosphate contacts are provided by residues glycine 85, 88-89 (GD), threonine 93, 95-98 (NVST), 113-121 (KHGNRALSS), and alanine 125. Residue glycine 85 participates in anthranilate binding. Residue serine 97 participates in Mg(2+) binding. Residue asparagine 116 coordinates anthranilate. Residue arginine 171 coordinates anthranilate. Residues aspartate 233 and glutamate 234 each contribute to the Mg(2+) site.

This sequence belongs to the anthranilate phosphoribosyltransferase family. Homodimer. It depends on Mg(2+) as a cofactor.

The catalysed reaction is N-(5-phospho-beta-D-ribosyl)anthranilate + diphosphate = 5-phospho-alpha-D-ribose 1-diphosphate + anthranilate. It participates in amino-acid biosynthesis; L-tryptophan biosynthesis; L-tryptophan from chorismate: step 2/5. Its function is as follows. Catalyzes the transfer of the phosphoribosyl group of 5-phosphorylribose-1-pyrophosphate (PRPP) to anthranilate to yield N-(5'-phosphoribosyl)-anthranilate (PRA). The sequence is that of Anthranilate phosphoribosyltransferase from Gluconobacter oxydans (strain 621H) (Gluconobacter suboxydans).